A 428-amino-acid chain; its full sequence is Enolase (428 aa).

Gln-165 is a binding site for (2R)-2-phosphoglycerate. Glu-207 (proton donor) is an active-site residue. Positions 244, 285, and 312 each coordinate Mg(2+). Residues Lys-337, Arg-366, Ser-367, and Lys-388 each contribute to the (2R)-2-phosphoglycerate site. The active-site Proton acceptor is the Lys-337.

It belongs to the enolase family. In terms of assembly, component of the RNA degradosome, a multiprotein complex involved in RNA processing and mRNA degradation. It depends on Mg(2+) as a cofactor.

The protein resides in the cytoplasm. It localises to the secreted. Its subcellular location is the cell surface. The catalysed reaction is (2R)-2-phosphoglycerate = phosphoenolpyruvate + H2O. It functions in the pathway carbohydrate degradation; glycolysis; pyruvate from D-glyceraldehyde 3-phosphate: step 4/5. Functionally, catalyzes the reversible conversion of 2-phosphoglycerate (2-PG) into phosphoenolpyruvate (PEP). It is essential for the degradation of carbohydrates via glycolysis. This Coxiella burnetii (strain CbuK_Q154) (Coxiella burnetii (strain Q154)) protein is Enolase.